The following is a 257-amino-acid chain: Imidazole glycerol phosphate synthase subunit HisF (257 aa).

Residues aspartate 11 and aspartate 130 contribute to the active site.

The protein belongs to the HisA/HisF family. Heterodimer of HisH and HisF.

The protein resides in the cytoplasm. It catalyses the reaction 5-[(5-phospho-1-deoxy-D-ribulos-1-ylimino)methylamino]-1-(5-phospho-beta-D-ribosyl)imidazole-4-carboxamide + L-glutamine = D-erythro-1-(imidazol-4-yl)glycerol 3-phosphate + 5-amino-1-(5-phospho-beta-D-ribosyl)imidazole-4-carboxamide + L-glutamate + H(+). The protein operates within amino-acid biosynthesis; L-histidine biosynthesis; L-histidine from 5-phospho-alpha-D-ribose 1-diphosphate: step 5/9. In terms of biological role, IGPS catalyzes the conversion of PRFAR and glutamine to IGP, AICAR and glutamate. The HisF subunit catalyzes the cyclization activity that produces IGP and AICAR from PRFAR using the ammonia provided by the HisH subunit. This Tolumonas auensis (strain DSM 9187 / NBRC 110442 / TA 4) protein is Imidazole glycerol phosphate synthase subunit HisF.